Consider the following 400-residue polypeptide: Sphingosine 1-phosphate receptor 5 (400 aa).

The Extracellular segment spans residues 1–41 (MEPGLLRPAPVSEVIVLHYNYTGKLRGARYQPGAGLRADAA). Asn20 carries an N-linked (GlcNAc...) asparagine glycan. A helical membrane pass occupies residues 42-62 (VCLAVCAFIVLENLAVLLVLV). Over 63–68 (RHPRFH) the chain is Cytoplasmic. The helical transmembrane segment at 69–89 (APMFLLLGSLTLSDLLAGAAY) threads the bilayer. Over 90-111 (ATNILLSGPLTLRLSPALWFAR) the chain is Extracellular. The chain crosses the membrane as a helical span at residues 112–132 (EGGVFVALAASVLSLLAIALE). Residues 133–151 (RHLTMARRGPAPAASRART) are Cytoplasmic-facing. The helical transmembrane segment at 152–172 (LAMAVAAWGASLLLGLLPALG) threads the bilayer. At 173-192 (WNCLGRLETCSTVLPLYAKA) the chain is on the extracellular side. The helical transmembrane segment at 193-213 (YVLFCVLAFLGILAAICALYA) threads the bilayer. Residues 214–253 (RIYCQVRANARRLRAGPGSRRATSSSRSRHTPRSLALLRT) are Cytoplasmic-facing. The helical transmembrane segment at 254–274 (LSVVLLAFVACWGPLFLLLLL) threads the bilayer. Over 275 to 288 (DVACPARACPVLLQ) the chain is Extracellular. The helical transmembrane segment at 289–309 (ADPFLGLAMANSLLNPIIYTF) threads the bilayer. The Cytoplasmic segment spans residues 310 to 400 (TNRDLRHALL…NRSLVPTATD (91 aa)). The S-palmitoyl cysteine moiety is linked to residue Cys324. Residues 331-400 (QDSSNSLQRS…NRSLVPTATD (70 aa)) form a disordered region. Phosphoserine occurs at positions 340, 342, and 384. The span at 360–400 (DRSSSPSEHLSPQQDGVDTSCSTGSPGVATANRSLVPTATD) shows a compositional bias: polar residues.

This sequence belongs to the G-protein coupled receptor 1 family. Expressed in spleen and brain. In the CNS expression is restricted to oligodendrocytes.

The protein resides in the cell membrane. Functionally, receptor for the lysosphingolipid sphingosine 1-phosphate (S1P). S1P is a bioactive lysophospholipid that elicits diverse physiological effect on most types of cells and tissues. Is coupled to both the G(i/0)alpha and G(12) subclass of heteromeric G-proteins. S1P activation on oligodendroglial cells modulates two distinct functional pathways mediating either process retraction or cell survival. S1P activation on O4-positive pre-oligodendrocytes induces process retraction via a Rho kinase/collapsin response-mediated protein signaling pathway. The S1P-induced survival of mature oligodendrocytes is mediated through a pertussis toxin-sensitive, Akt-dependent pathway. S1P activation on oligodendroglial cells modulates two distinct functional pathways mediating either process retraction or cell survival. These effects depend on the developmental stage of the cell. The polypeptide is Sphingosine 1-phosphate receptor 5 (S1pr5) (Mus musculus (Mouse)).